Reading from the N-terminus, the 121-residue chain is Large ribosomal subunit protein bL12 (121 aa).

This sequence belongs to the bacterial ribosomal protein bL12 family. As to quaternary structure, homodimer. Part of the ribosomal stalk of the 50S ribosomal subunit. Forms a multimeric L10(L12)X complex, where L10 forms an elongated spine to which 2 to 4 L12 dimers bind in a sequential fashion. Binds GTP-bound translation factors.

Forms part of the ribosomal stalk which helps the ribosome interact with GTP-bound translation factors. Is thus essential for accurate translation. This is Large ribosomal subunit protein bL12 from Vibrio atlanticus (strain LGP32) (Vibrio splendidus (strain Mel32)).